Consider the following 312-residue polypeptide: Ubiquinone biosynthesis O-methyltransferase, mitochondrial (312 aa).

The transit peptide at 1 to 32 directs the protein to the mitochondrion; sequence MLLRSRFLKVIHVRKQLSACSRFAIQTQTRCK. S-adenosyl-L-methionine-binding residues include Arg-68, Gly-130, Asp-153, and Met-196. Positions 197, 200, and 201 each coordinate Mg(2+).

Belongs to the class I-like SAM-binding methyltransferase superfamily. UbiG/COQ3 family. Component of a multi-subunit COQ enzyme complex, composed of at least COQ3, COQ4, COQ5, COQ6, COQ7 and COQ9. Interacts directly with COQ4. It depends on Mg(2+) as a cofactor.

It localises to the mitochondrion inner membrane. It carries out the reaction 3,4-dihydroxy-5-(all-trans-hexaprenyl)benzoate + S-adenosyl-L-methionine = 4-hydroxy-3-methoxy-5-(all-trans-hexaprenyl)benzoate + S-adenosyl-L-homocysteine + H(+). It catalyses the reaction a 3-demethylubiquinone + S-adenosyl-L-methionine = a ubiquinone + S-adenosyl-L-homocysteine. The catalysed reaction is 3-demethylubiquinol-6 + S-adenosyl-L-methionine = ubiquinol-6 + S-adenosyl-L-homocysteine + H(+). It functions in the pathway cofactor biosynthesis; ubiquinone biosynthesis. Regulated in response to catabolite repression. In terms of biological role, O-methyltransferase required for two non-consecutive steps during ubiquinone biosynthesis. Catalyzes the 2 O-methylation of 3,4-dihydroxy-5-(all-trans-hexaprenyl)benzoic acid into 4-hydroxy-3-methoxy-5-(all-trans-hexaprenyl)benzoic acid. Also catalyzes the last step of ubiquinone biosynthesis by mediating methylation of 3-demethylubiquinone into ubiquinone. Also able to mediate the methylation of 3-demethylubiquinol-6 into ubiquinol-6. This is Ubiquinone biosynthesis O-methyltransferase, mitochondrial from Saccharomyces cerevisiae (strain ATCC 204508 / S288c) (Baker's yeast).